The primary structure comprises 181 residues: Protein GrpE (181 aa).

The protein belongs to the GrpE family. In terms of assembly, homodimer.

The protein resides in the cytoplasm. Functionally, participates actively in the response to hyperosmotic and heat shock by preventing the aggregation of stress-denatured proteins, in association with DnaK and GrpE. It is the nucleotide exchange factor for DnaK and may function as a thermosensor. Unfolded proteins bind initially to DnaJ; upon interaction with the DnaJ-bound protein, DnaK hydrolyzes its bound ATP, resulting in the formation of a stable complex. GrpE releases ADP from DnaK; ATP binding to DnaK triggers the release of the substrate protein, thus completing the reaction cycle. Several rounds of ATP-dependent interactions between DnaJ, DnaK and GrpE are required for fully efficient folding. This Verminephrobacter eiseniae (strain EF01-2) protein is Protein GrpE.